The primary structure comprises 130 residues: Small ribosomal subunit protein uS9 (130 aa).

The protein belongs to the universal ribosomal protein uS9 family.

The polypeptide is Small ribosomal subunit protein uS9 (Buchnera aphidicola subsp. Baizongia pistaciae (strain Bp)).